The primary structure comprises 1129 residues: Phytochrome A type 3 (1129 aa).

The segment covering methionine 1 to arginine 21 has biased composition (low complexity). The tract at residues methionine 1–alanine 24 is disordered. The region spanning serine 217–phenylalanine 402 is the GAF domain. Position 322 (cysteine 322) interacts with phytochromobilin. 2 consecutive PAS domains span residues valine 618–lysine 688 and valine 748–cysteine 822. In terms of domain architecture, Histidine kinase spans tyrosine 902–serine 1122.

The protein belongs to the phytochrome family. Homodimer. Contains one covalently linked phytochromobilin chromophore.

Functionally, regulatory photoreceptor which exists in two forms that are reversibly interconvertible by light: the Pr form that absorbs maximally in the red region of the spectrum and the Pfr form that absorbs maximally in the far-red region. Photoconversion of Pr to Pfr induces an array of morphogenic responses, whereas reconversion of Pfr to Pr cancels the induction of those responses. Pfr controls the expression of a number of nuclear genes including those encoding the small subunit of ribulose-bisphosphate carboxylase, chlorophyll A/B binding protein, protochlorophyllide reductase, rRNA, etc. It also controls the expression of its own gene(s) in a negative feedback fashion. The polypeptide is Phytochrome A type 3 (PHYA3) (Avena sativa (Oat)).